A 1035-amino-acid chain; its full sequence is POM121-like protein 2 (1035 aa).

Disordered stretches follow at residues 1–37 (MGSF…PLHQ), 177–213 (LFPE…PRPG), 286–343 (IKKE…LGYA), 415–508 (LGPL…QSTL), 754–791 (SPLG…QPAL), and 972–1035 (NTPV…AYKK). Basic residues predominate over residues 27–37 (TKRRPPQPLHQ). The span at 309-319 (GGSESSGQQNQ) shows a compositional bias: low complexity. Polar residues-rich tracts occupy residues 320–330 (KIPQLPSSPEN), 420–431 (SPQSTGEATSVA), and 445–462 (GCSQ…SKPT). Residues 464–481 (TFILLTPTSPTLPVTDTT) show a composition bias toward low complexity. Positions 493 to 502 (PMPPDPPAPP) are enriched in pro residues. Residues 1000-1016 (RGPFRSSASSFSIGAKS) show a composition bias toward low complexity. The span at 1017 to 1035 (KTPKNREKGHSRRHHAYKK) shows a compositional bias: basic residues.

Belongs to the POM121 family.

The protein is POM121-like protein 2 (POM121L2) of Homo sapiens (Human).